Consider the following 205-residue polypeptide: N-(5'-phosphoribosyl)anthranilate isomerase (205 aa).

Belongs to the TrpF family.

It catalyses the reaction N-(5-phospho-beta-D-ribosyl)anthranilate = 1-(2-carboxyphenylamino)-1-deoxy-D-ribulose 5-phosphate. It participates in amino-acid biosynthesis; L-tryptophan biosynthesis; L-tryptophan from chorismate: step 3/5. This Phocaeicola vulgatus (strain ATCC 8482 / DSM 1447 / JCM 5826 / CCUG 4940 / NBRC 14291 / NCTC 11154) (Bacteroides vulgatus) protein is N-(5'-phosphoribosyl)anthranilate isomerase.